The sequence spans 148 residues: MTKIKDLMTADLQYCTVLDNVYEAAVKMKDANVGAIPVVDEDGETLVGIVTDRDLVLRGIAIKKPNSQKITDAMTEKPVSVEEDASVDEVLHLMASHQLRRIPVTKNKKLTGIVTLGDLSLSEQTNERAGSALSDISEGDNREEGFFH.

CBS domains lie at 8–68 (MTAD…PNSQ) and 74–130 (MTEK…ERAG). Residues 127–148 (ERAGSALSDISEGDNREEGFFH) form a disordered region. Over residues 139–148 (GDNREEGFFH) the composition is skewed to basic and acidic residues.

This is an uncharacterized protein from Bacillus subtilis (strain 168).